A 581-amino-acid chain; its full sequence is 2-hydroxyacyl-CoA lyase 1 (581 aa).

Serine 4 and serine 6 each carry phosphoserine. Glutamate 63 lines the thiamine diphosphate pocket. Residues lysine 354, lysine 361, and lysine 368 each carry the N6-succinyllysine modification. A thiamine pyrophosphate binding region spans residues 404–487 (TMDIGRTMLQ…IILLVVNNNG (84 aa)). The Mg(2+) site is built by aspartate 458 and asparagine 485. The short motif at 579-581 (SNM) is the Microbody targeting signal element.

This sequence belongs to the TPP enzyme family. In terms of assembly, homotetramer. It depends on Mg(2+) as a cofactor. Thiamine diphosphate is required as a cofactor. Predominanly expressed in liver.

The protein localises to the peroxisome. The enzyme catalyses a 2-hydroxy-3-methyl fatty acyl-CoA = a 2-methyl-branched fatty aldehyde + formyl-CoA. It catalyses the reaction an (R)-2-hydroxy-long-chain-fatty acyl-CoA = a long-chain fatty aldehyde + formyl-CoA. The catalysed reaction is 2-hydroxy-3-methylhexadecanoyl-CoA = 2-methylpentadecanal + formyl-CoA. It carries out the reaction 2-hydroxyoctadecanoyl-CoA = heptadecanal + formyl-CoA. The enzyme catalyses 2-hydroxyphytanoyl-CoA = 2,6,10,14-tetramethylpentadecanal + formyl-CoA. It participates in lipid metabolism; fatty acid metabolism. In terms of biological role, peroxisomal 2-OH acyl-CoA lyase involved in the cleavage (C1 removal) reaction in the fatty acid alpha-oxydation in a thiamine pyrophosphate (TPP)-dependent manner. Involved in the degradation of 3-methyl-branched fatty acids like phytanic acid and the shortening of 2-hydroxy long-chain fatty acids. Plays a significant role in the biosynthesis of heptadecanal in the liver. The sequence is that of 2-hydroxyacyl-CoA lyase 1 (Hacl1) from Mus musculus (Mouse).